We begin with the raw amino-acid sequence, 229 residues long: Thiamine-phosphate synthase (229 aa).

4-amino-2-methyl-5-(diphosphooxymethyl)pyrimidine-binding positions include 38 to 42 (QFREK) and Asn73. Residues Asp74 and Asp93 each contribute to the Mg(2+) site. 4-amino-2-methyl-5-(diphosphooxymethyl)pyrimidine is bound at residue Ser111. Residue 137–139 (TLS) coordinates 2-[(2R,5Z)-2-carboxy-4-methylthiazol-5(2H)-ylidene]ethyl phosphate. Lys140 contributes to the 4-amino-2-methyl-5-(diphosphooxymethyl)pyrimidine binding site. 2-[(2R,5Z)-2-carboxy-4-methylthiazol-5(2H)-ylidene]ethyl phosphate is bound by residues Gly169 and 189-190 (IS).

Belongs to the thiamine-phosphate synthase family. The cofactor is Mg(2+).

The enzyme catalyses 2-[(2R,5Z)-2-carboxy-4-methylthiazol-5(2H)-ylidene]ethyl phosphate + 4-amino-2-methyl-5-(diphosphooxymethyl)pyrimidine + 2 H(+) = thiamine phosphate + CO2 + diphosphate. It catalyses the reaction 2-(2-carboxy-4-methylthiazol-5-yl)ethyl phosphate + 4-amino-2-methyl-5-(diphosphooxymethyl)pyrimidine + 2 H(+) = thiamine phosphate + CO2 + diphosphate. It carries out the reaction 4-methyl-5-(2-phosphooxyethyl)-thiazole + 4-amino-2-methyl-5-(diphosphooxymethyl)pyrimidine + H(+) = thiamine phosphate + diphosphate. It functions in the pathway cofactor biosynthesis; thiamine diphosphate biosynthesis; thiamine phosphate from 4-amino-2-methyl-5-diphosphomethylpyrimidine and 4-methyl-5-(2-phosphoethyl)-thiazole: step 1/1. Its function is as follows. Condenses 4-methyl-5-(beta-hydroxyethyl)thiazole monophosphate (THZ-P) and 2-methyl-4-amino-5-hydroxymethyl pyrimidine pyrophosphate (HMP-PP) to form thiamine monophosphate (TMP). This chain is Thiamine-phosphate synthase, found in Streptococcus suis (strain 98HAH33).